The following is a 336-amino-acid chain: Mediator of RNA polymerase II transcription subunit 4 (336 aa).

Disordered stretches follow at residues 1-45 (MNST…SNVV) and 59-85 (NVEEVSPGPDSASEAGESPSIRSQDEA). Residues 154-192 (QQAAQTIAALERVSEGLDDKIRDMIRKLAECRRELRNYQ) adopt a coiled-coil conformation. The disordered stretch occupies residues 281–336 (PVANGVAQNHNNGYAMERRLSTGYGSDNDGDTNMNGRSGLAGLDIFDDDDDDDDDD). Positions 325–336 (IFDDDDDDDDDD) are enriched in acidic residues.

It belongs to the Mediator complex subunit 4 family. Component of the Mediator complex.

It is found in the nucleus. Component of the Mediator complex, a coactivator involved in the regulated transcription of nearly all RNA polymerase II-dependent genes. Mediator functions as a bridge to convey information from gene-specific regulatory proteins to the basal RNA polymerase II transcription machinery. Mediator is recruited to promoters by direct interactions with regulatory proteins and serves as a scaffold for the assembly of a functional preinitiation complex with RNA polymerase II and the general transcription factors. This chain is Mediator of RNA polymerase II transcription subunit 4 (MED4), found in Yarrowia lipolytica (strain CLIB 122 / E 150) (Yeast).